Reading from the N-terminus, the 179-residue chain is Inner membrane-spanning protein YciB (179 aa).

Helical transmembrane passes span 22-42, 50-70, 76-96, 121-141, and 149-169; these read IYAA…YSWV, MALI…FFHN, WKVT…QWVM, LAWA…AFWL, and FKVF…GVYI.

The protein belongs to the YciB family.

Its subcellular location is the cell inner membrane. Functionally, plays a role in cell envelope biogenesis, maintenance of cell envelope integrity and membrane homeostasis. This chain is Inner membrane-spanning protein YciB, found in Salmonella dublin (strain CT_02021853).